Here is a 511-residue protein sequence, read N- to C-terminus: GATOR complex protein NPRL3 (511 aa).

The disordered stretch occupies residues 37-58; sequence KPATKAPSKDPQPSSSNPGQCV.

This sequence belongs to the NPR3 family. In terms of assembly, probably part of the GATOR complex.

Its subcellular location is the lysosome membrane. Its function is as follows. As a component of the GATOR complex may function in the amino acid-sensing branch of the TORC1 signaling pathway. The polypeptide is GATOR complex protein NPRL3 (nprl-3) (Caenorhabditis elegans).